Reading from the N-terminus, the 299-residue chain is Putative KilA-N domain-containing protein R879 (299 aa).

Residues 1 to 75 (MKSDNGILMS…IKVSEIVLSY (75 aa)) enclose the KilA-N domain. Residues 76–150 (HAKEAIKEKE…DKKINELLSK (75 aa)) are a coiled coil.

This is Putative KilA-N domain-containing protein R879 from Acanthamoeba polyphaga mimivirus (APMV).